The chain runs to 251 residues: Segregation and condensation protein A (251 aa).

It belongs to the ScpA family. In terms of assembly, component of a cohesin-like complex composed of ScpA, ScpB and the Smc homodimer, in which ScpA and ScpB bind to the head domain of Smc. The presence of the three proteins is required for the association of the complex with DNA.

It localises to the cytoplasm. Participates in chromosomal partition during cell division. May act via the formation of a condensin-like complex containing Smc and ScpB that pull DNA away from mid-cell into both cell halves. The chain is Segregation and condensation protein A from Bacillus licheniformis (strain ATCC 14580 / DSM 13 / JCM 2505 / CCUG 7422 / NBRC 12200 / NCIMB 9375 / NCTC 10341 / NRRL NRS-1264 / Gibson 46).